Reading from the N-terminus, the 550-residue chain is Zorya protein ZorA (550 aa).

The next 3 membrane-spanning stretches (helical) occupy residues 16 to 36, 52 to 72, and 92 to 112; these read TLITNIFIWAVIFVFLSAWWC, LMGALGILGTFIGIIIGLLNF, and FITSIVGMFFAILFNGMDAFF.

This sequence belongs to the MotA family.

The protein resides in the cell inner membrane. In terms of biological role, component of antiviral defense system Zorya type II, composed of ZorA, ZorB and ZorE. Expression of Zorya type II in E.coli (strain MG1655) confers resistance to phages SECphi7 and T7. While most T7 infected Zorya-containing cells undergo abortive infection, a minority produce viable phage progeny. These eventually accumulate to a high multiplicity of infection, leading to culture collapse by 170 minutes after initial infection. ZorA and ZorB probably assemble in the cell inner membrane and exert their effect there. This chain is Zorya protein ZorA, found in Escherichia coli (strain ATCC 8739 / DSM 1576 / NBRC 3972 / NCIMB 8545 / WDCM 00012 / Crooks).